The chain runs to 415 residues: Fructose-like permease IIC component (415 aa).

Residues 1-46 (MAIKKRSATVVPGASGAAAAVKNPQASKSSFWGELPQHVMSGISRM) lie on the Cytoplasmic side of the membrane. In terms of domain architecture, PTS EIIC type-2 spans 35–410 (LPQHVMSGIS…RLMMFRKGKL (376 aa)). A helical transmembrane segment spans residues 47 to 67 (VPTLIMGGVILAFSQLIAYSW). Topologically, residues 68–101 (LKIPAEIGIMDALNSGKFSGFDLSLLKFAWLSQS) are periplasmic. Residues 102-122 (FGGVLFGFAIPMFAAFVANSI) traverse the membrane as a helical segment. Residues 123–126 (GGKL) lie on the Cytoplasmic side of the membrane. The chain crosses the membrane as a helical span at residues 127–147 (AFPAGFIGGLMSTQPTQLLNF). At 148 to 157 (DPSTMQWATS) the chain is on the periplasmic side. Residues 158–178 (SPVPSTFIGALIISIVAGYLV) traverse the membrane as a helical segment. At 179–197 (KWMNQKIQLPDFLLAFKTT) the chain is on the cytoplasmic side. The chain crosses the membrane as a helical span at residues 198-218 (FLLPILSAIFVMLAMYYVITP). Over 219 to 237 (FGGWINGGIRTVLTAAGEK) the chain is Periplasmic. A helical transmembrane segment spans residues 238–258 (GALMYAMGIAAATAIDLGGPI). Topologically, residues 259–276 (NKAAGFVAFSFTTDHVLP) are cytoplasmic. A helical membrane pass occupies residues 277–297 (VTARSIAIVIPPIGLGLATII). The Periplasmic segment spans residues 298–318 (DRRLTGKRLFNAQLYPQGKTA). A helical transmembrane segment spans residues 319-339 (MFLAFMGISEGAIPFALESPI). At 340-341 (TA) the chain is on the cytoplasmic side. A helical membrane pass occupies residues 342–362 (IPSYMVGAIVGSTAAVWLGAV). Topologically, residues 363–378 (QWFPESAIWAWPLVTN) are periplasmic. A helical membrane pass occupies residues 379 to 399 (LGVYMAGIALGAVITALMVVF). Topologically, residues 400-415 (LRLMMFRKGKLLIDSL) are cytoplasmic.

Its subcellular location is the cell inner membrane. The phosphoenolpyruvate-dependent sugar phosphotransferase system (PTS), a major carbohydrate active -transport system, catalyzes the phosphorylation of incoming sugar substrates concomitant with their translocation across the cell membrane. This chain is Fructose-like permease IIC component (fryC), found in Escherichia coli O157:H7.